We begin with the raw amino-acid sequence, 212 residues long: Peptide methionine sulfoxide reductase MsrA (212 aa).

Residue cysteine 52 is part of the active site.

The protein belongs to the MsrA Met sulfoxide reductase family.

The enzyme catalyses L-methionyl-[protein] + [thioredoxin]-disulfide + H2O = L-methionyl-(S)-S-oxide-[protein] + [thioredoxin]-dithiol. It catalyses the reaction [thioredoxin]-disulfide + L-methionine + H2O = L-methionine (S)-S-oxide + [thioredoxin]-dithiol. Has an important function as a repair enzyme for proteins that have been inactivated by oxidation. Catalyzes the reversible oxidation-reduction of methionine sulfoxide in proteins to methionine. This Salmonella arizonae (strain ATCC BAA-731 / CDC346-86 / RSK2980) protein is Peptide methionine sulfoxide reductase MsrA.